Consider the following 369-residue polypeptide: Ferredoxin--NADP reductase 2 (369 aa).

The tract at residues 1-23 (MDLSIPNPVADTTKQVDGGSPAG) is disordered. Positions 58, 66, 71, 111, 146, 311, and 352 each coordinate FAD.

The protein belongs to the ferredoxin--NADP reductase type 2 family. As to quaternary structure, homodimer. Requires FAD as cofactor.

It catalyses the reaction 2 reduced [2Fe-2S]-[ferredoxin] + NADP(+) + H(+) = 2 oxidized [2Fe-2S]-[ferredoxin] + NADPH. This Cupriavidus necator (strain ATCC 17699 / DSM 428 / KCTC 22496 / NCIMB 10442 / H16 / Stanier 337) (Ralstonia eutropha) protein is Ferredoxin--NADP reductase 2.